A 638-amino-acid polypeptide reads, in one-letter code: Plasma kallikrein (638 aa).

Residues 1–19 (MILFKQVGYFVSLFATVSC) form the signal peptide. Apple domains follow at residues 21–104 (CLSQ…LKQC), 111–194 (CHQD…LKSC), 201–284 (CPMD…LFTC), and 292–375 (CHFK…LRLC). Cystine bridges form between C21–C104, C47–C77, C51–C57, C111–C194, C137–C166, C141–C147, C201–C284, C227–C256, C231–C237, C292–C375, C318–C347, C322–C328, C340–C345, C383–C503, C419–C435, C517–C584, C548–C563, and C574–C602. Residue N127 is glycosylated (N-linked (GlcNAc...) asparagine). N215 carries N-linked (GlcNAc...) asparagine glycosylation. N308 is a glycosylation site (N-linked (GlcNAc...) asparagine). Residues 391–626 (IVGGTNSSLG…YIDWILEKIQ (236 aa)) form the Peptidase S1 domain. The N-linked (GlcNAc...) asparagine glycan is linked to N396. The active-site Charge relay system is the H434. N453 carries N-linked (GlcNAc...) asparagine glycosylation. Residue D483 is the Charge relay system of the active site. An N-linked (GlcNAc...) asparagine glycan is attached at N494. The active-site Charge relay system is S578.

This sequence belongs to the peptidase S1 family. Plasma kallikrein subfamily. Forms a heterodimer with SERPINA5. The zymogen is activated by factor XIIa, which cleaves the molecule into a light chain, which contains the active site, and a heavy chain, which associates with HMW kininogen. These chains are linked by one or more disulfide bonds.

Its subcellular location is the secreted. It carries out the reaction Cleaves selectively Arg-|-Xaa and Lys-|-Xaa bonds, including Lys-|-Arg and Arg-|-Ser bonds in (human) kininogen to release bradykinin.. Inhibited by SERPINA5. The enzyme cleaves Lys-Arg and Arg-Ser bonds. It activates, in a reciprocal reaction, factor XII after its binding to a negatively charged surface. It also releases bradykinin from HMW kininogen and may also play a role in the renin-angiotensin system by converting prorenin into renin. The protein is Plasma kallikrein (Klkb1) of Rattus norvegicus (Rat).